A 135-amino-acid polypeptide reads, in one-letter code: Flagellar assembly factor FliW 2 (135 aa).

The protein belongs to the FliW family. Interacts with translational regulator CsrA and flagellin(s).

Its subcellular location is the cytoplasm. Its function is as follows. Acts as an anti-CsrA protein, binds CsrA and prevents it from repressing translation of its target genes, one of which is flagellin. Binds to flagellin and participates in the assembly of the flagellum. This chain is Flagellar assembly factor FliW 2, found in Helicobacter acinonychis (strain Sheeba).